Here is a 338-residue protein sequence, read N- to C-terminus: Methionine import ATP-binding protein MetN 2 (338 aa).

Residues 2-242 (IEIEKVCVDF…PQHAFTQQLV (241 aa)) enclose the ABC transporter domain. Residue 39–46 (GTSGAGKS) coordinates ATP.

Belongs to the ABC transporter superfamily. Methionine importer (TC 3.A.1.24) family. As to quaternary structure, the complex is composed of two ATP-binding proteins (MetN), two transmembrane proteins (MetI) and a solute-binding protein (MetQ).

It is found in the cell inner membrane. The catalysed reaction is L-methionine(out) + ATP + H2O = L-methionine(in) + ADP + phosphate + H(+). The enzyme catalyses D-methionine(out) + ATP + H2O = D-methionine(in) + ADP + phosphate + H(+). In terms of biological role, part of the ABC transporter complex MetNIQ involved in methionine import. Responsible for energy coupling to the transport system. This Salmonella paratyphi A (strain ATCC 9150 / SARB42) protein is Methionine import ATP-binding protein MetN 2.